Reading from the N-terminus, the 122-residue chain is Large ribosomal subunit protein uL14 (122 aa).

Belongs to the universal ribosomal protein uL14 family. As to quaternary structure, part of the 50S ribosomal subunit. Forms a cluster with proteins L3 and L19. In the 70S ribosome, L14 and L19 interact and together make contacts with the 16S rRNA in bridges B5 and B8.

In terms of biological role, binds to 23S rRNA. Forms part of two intersubunit bridges in the 70S ribosome. This chain is Large ribosomal subunit protein uL14, found in Pseudothermotoga lettingae (strain ATCC BAA-301 / DSM 14385 / NBRC 107922 / TMO) (Thermotoga lettingae).